A 213-amino-acid polypeptide reads, in one-letter code: Ribosomal RNA small subunit methyltransferase G (213 aa).

S-adenosyl-L-methionine contacts are provided by residues Gly72, Phe77, 125 to 126 (IE), and Arg141.

This sequence belongs to the methyltransferase superfamily. RNA methyltransferase RsmG family.

It localises to the cytoplasm. The enzyme catalyses guanosine(527) in 16S rRNA + S-adenosyl-L-methionine = N(7)-methylguanosine(527) in 16S rRNA + S-adenosyl-L-homocysteine. Its function is as follows. Specifically methylates the N7 position of guanine in position 527 of 16S rRNA. The polypeptide is Ribosomal RNA small subunit methyltransferase G (Rhizobium meliloti (strain 1021) (Ensifer meliloti)).